Consider the following 1134-residue polypeptide: Myosin-4 (1134 aa).

The Myosin N-terminal SH3-like domain maps to 110 to 160; sequence REKLCVWCRVAANGQWHLGKIHSTSSSDDVCVMLSANDDVRTMEEIFPANP. The region spanning 164 to 830 is the Myosin motor domain; it reads EGVEDLTQLS…VISVLEERKK (667 aa). Residues 255 to 262 and 304 to 312 contribute to the ATP site; these read GESGAGKT and NDNSSRFGK. Actin-binding stretches follow at residues 589-623 and 710-732; these read LIEK…KQHL and LFKL…KPNS. IQ domains are found at residues 832 to 861, 855 to 884, and 891 to 920; these read VLRG…AAVI, MRNA…SAIV, and ELDA…KNKP. The interval 913–939 is disordered; that stretch reads STQQKNKPRNEKKKTRRKSTKRVSEDK. The span at 918–933 shows a compositional bias: basic residues; that stretch reads NKPRNEKKKTRRKSTK. The stretch at 953–999 forms a coiled coil; sequence LADLQSRVLKVEAAIMQKEDENTALQEELQRFEERWLENETRMKSME.

It belongs to the TRAFAC class myosin-kinesin ATPase superfamily. Myosin family. Plant myosin class VIII subfamily. As to quaternary structure, homodimer.

Its function is as follows. Myosin heavy chain that is required for the cell cycle-regulated transport of various organelles and proteins for their segregation. Functions by binding with its tail domain to receptor proteins on organelles and exerting force with its N-terminal motor domain against actin filaments, thereby transporting its cargo along polarized actin cables. This chain is Myosin-4 (VIII-B), found in Arabidopsis thaliana (Mouse-ear cress).